The following is a 126-amino-acid chain: UPF0538 protein C2orf76 homolog (126 aa).

Belongs to the UPF0538 family.

The protein is UPF0538 protein C2orf76 homolog of Xenopus tropicalis (Western clawed frog).